Reading from the N-terminus, the 94-residue chain is MRLTTMHSVILMLLLVFAFDNVDGDEPGQTARDVDNRNFMSILRSEGKPVHFLRAIKKRDCTGQACTTGDNCPSECVCNEHHFCTGKCCYFLHA.

Residues 1–24 (MRLTTMHSVILMLLLVFAFDNVDG) form the signal peptide. Positions 25 to 59 (DEPGQTARDVDNRNFMSILRSEGKPVHFLRAIKKR) are excised as a propeptide.

Contains 4 disulfide bonds. In terms of tissue distribution, expressed by the venom duct.

Its subcellular location is the secreted. Functionally, probable neurotoxin. This chain is Conotoxin Im026, found in Conus imperialis (Imperial cone).